Reading from the N-terminus, the 410-residue chain is Argininosuccinate synthase (410 aa).

ATP is bound at residue 10-18; that stretch reads AYSGGLDTS. Tyrosine 88 and serine 93 together coordinate L-citrulline. Glycine 118 is a binding site for ATP. Threonine 120, asparagine 124, and aspartate 125 together coordinate L-aspartate. Asparagine 124 contributes to the L-citrulline binding site. L-citrulline contacts are provided by arginine 128, serine 177, serine 186, glutamate 262, and tyrosine 274.

It belongs to the argininosuccinate synthase family. Type 1 subfamily. In terms of assembly, homotetramer.

It localises to the cytoplasm. It carries out the reaction L-citrulline + L-aspartate + ATP = 2-(N(omega)-L-arginino)succinate + AMP + diphosphate + H(+). It functions in the pathway amino-acid biosynthesis; L-arginine biosynthesis; L-arginine from L-ornithine and carbamoyl phosphate: step 2/3. This Thermoanaerobacter pseudethanolicus (strain ATCC 33223 / 39E) (Clostridium thermohydrosulfuricum) protein is Argininosuccinate synthase.